We begin with the raw amino-acid sequence, 1296 residues long: DNA-directed RNA polymerase subunit beta' (1296 aa).

Residues Cys60, Cys62, Cys75, and Cys78 each coordinate Zn(2+). Basic and acidic residues predominate over residues 185 to 202 (EEEGGKAAEKRKLRDSAD). The segment at 185 to 204 (EEEGGKAAEKRKLRDSADRQ) is disordered. Residues Asp535, Asp537, and Asp539 each contribute to the Mg(2+) site. Residues Cys877, Cys954, Cys961, and Cys964 each contribute to the Zn(2+) site.

It belongs to the RNA polymerase beta' chain family. As to quaternary structure, the RNAP catalytic core consists of 2 alpha, 1 beta, 1 beta' and 1 omega subunit. When a sigma factor is associated with the core the holoenzyme is formed, which can initiate transcription. Requires Mg(2+) as cofactor. Zn(2+) is required as a cofactor.

It carries out the reaction RNA(n) + a ribonucleoside 5'-triphosphate = RNA(n+1) + diphosphate. DNA-dependent RNA polymerase catalyzes the transcription of DNA into RNA using the four ribonucleoside triphosphates as substrates. The chain is DNA-directed RNA polymerase subunit beta' from Kocuria rhizophila (strain ATCC 9341 / DSM 348 / NBRC 103217 / DC2201).